Consider the following 109-residue polypeptide: Parvalbumin beta (109 aa).

Ala-2 bears the N-acetylalanine mark. Positions 22 to 41 (AGSFDHKKFFKACGLSGKST) are igE-binding. EF-hand domains follow at residues 39–74 (KSTD…FKAG) and 78–109 (LSDA…MIKG). The Ca(2+) site is built by Asp-52, Asp-54, Ser-56, Phe-58, Glu-60, Glu-63, Asp-91, Asp-93, Asp-95, Lys-97, and Glu-102.

Belongs to the parvalbumin family. The N-terminus is blocked. Expressed in both white and dark muscles (at protein level). About eight and a half times lower expression in the dark muscle than in the white muscle (at protein level).

In terms of biological role, in muscle, parvalbumin is thought to be involved in relaxation after contraction. It binds two calcium ions. This Scomber japonicus (Chub mackerel) protein is Parvalbumin beta.